A 261-amino-acid chain; its full sequence is LIM and SH3 domain protein 1 (261 aa).

Met1 is modified (N-acetylmethionine). Residues 5-56 (CARCGKIVYPTEKVNCLDKFWHKACFHCETCKMTLNMKNYKGYEKKPYCNAH) enclose the LIM zinc-binding domain. Residue Lys42 is modified to N6-acetyllysine. Nebulin repeat units follow at residues 61–95 (SFTM…KNKG) and 97–131 (GFSV…KSRM). A Phosphothreonine modification is found at Thr68. Lys75 carries the N6-methyllysine modification. Ser99 bears the Phosphoserine mark. Thr104 carries the phosphothreonine modification. The disordered stretch occupies residues 111-186 (KKTQDQISNI…QPVAQSYGGY (76 aa)). N6-succinyllysine is present on Lys112. Residue Ser118 is modified to Phosphoserine. Over residues 121–130 (KYHEEFEKSR) the composition is skewed to basic and acidic residues. Phosphoserine occurs at positions 134 and 146. The span at 167–183 (SAPVYQQPQQQPVAQSY) shows a compositional bias: low complexity. The SH3 domain maps to 202-261 (GGGKRYRAVYDYSAADEDEVSFQDGDTIVNVQQIDDGWMYGTVERTGDTGMLPANYVEAI).

As to quaternary structure, interacts with F-actin. Interacts with ANKRD54. Interacts with KBTBD10.

It localises to the cytoplasm. The protein localises to the cell cortex. It is found in the cytoskeleton. Plays an important role in the regulation of dynamic actin-based, cytoskeletal activities. Agonist-dependent changes in LASP1 phosphorylation may also serve to regulate actin-associated ion transport activities, not only in the parietal cell but also in certain other F-actin-rich secretory epithelial cell types. The sequence is that of LIM and SH3 domain protein 1 (LASP1) from Homo sapiens (Human).